The chain runs to 629 residues: MPDETNFTIEDIEPRPDALRGLDTQFLQDNTALVQAYRGLDWSDISSLTQMVDVIEQTVVKYGNPNDSIKLALETILWQILRKYPLLFGFWKRFATIEYQLFGLKKSIAVLATSVKWFPTSLELWCDYLNVLCVNNPNETDFIRNNFEIAKDLIGKQFLSHPFWDKFIEFEVGQKNWHNVQRIYEYIIEVPLHQYARFFTSYKKFLNEKNLKTTRNIDIVLRKTQTTVNEIWQFESKIKQPFFNLGQVLNDDLENWSRYLKFVTDPSKSLDKEFVMSVFDRCLIPCLYHENTWMMYIKWLTKKNISDEVVVDIYQKANTFLPLDFKTLRYDFLRFLKRKYRSNNTLFNNIFNETVSRYLKIWPNDILLMTEYLCMLKRHSFKNSLDQSPKEILEKQTSFTKILETSITNYINNQIDAKVHLQTLINDKNLSIVVVELIKTTWLVLKNNMQTRKYFNLYQKNILIKNSVPFWLTYYKFEKSNVNFTKLNKFIRELGVEIYLPTTVMNDILTDYKTFYLTHSNIVTYESSIIDSNTFDPILYPELKMSNPKYDPVLNTTANVDWHKKTEWKEAGHIGITTERPQISNSIIECNSGTLIQKPISLPNFRNLEKINQVKINDLYTEEFLKEGK.

7 HAT repeats span residues 68 to 100 (SIKL…IEYQ), 102 to 134 (FGLK…VLCV), 138 to 173 (NETD…FEVG), 175 to 208 (KNWH…FLNE), 233 to 265 (QFES…FVTD), 270 to 302 (LDKE…WLTK), and 446 to 480 (KNNM…FEKS).

This sequence belongs to the PRP39 family.

It is found in the nucleus. Its function is as follows. Function prior to stable branch point recognition by the U1 snRNP particle to facilitate or stabilize the U1 snRNP/5'-splice site interaction. Has a direct role in the assembly or function of a catalytically active spliceosome. This is Pre-mRNA-processing factor 39 (PRP39) from Saccharomyces cerevisiae (strain ATCC 204508 / S288c) (Baker's yeast).